A 170-amino-acid chain; its full sequence is RxLR effector protein CRE16 (170 aa).

An N-terminal signal peptide occupies residues 1–23 (MSKLFYAFAVLAVHVLTSSPTTA). The short motif at 47–68 (RFLRSIHEGEDSLKPSAFSEER) is the RxLR-dEER element.

Belongs to the RxLR effector family.

The protein resides in the secreted. It localises to the host cytoplasm. The protein localises to the host nucleus. In terms of biological role, effector that is involved in host plant infection. Contributes to virulence during the early infection stage, by inhibiting plant defense responses induced by both PAMP-triggered immunity (PTI) and effector-triggered immunity (ETI). In Phytophthora infestans (strain T30-4) (Potato late blight agent), this protein is RxLR effector protein CRE16.